The chain runs to 251 residues: Methionine aminopeptidase (251 aa).

His76 contributes to the substrate binding site. A divalent metal cation is bound by residues Asp93, Asp104, and His168. A substrate-binding site is contributed by His175. A divalent metal cation-binding residues include Glu202 and Glu233.

This sequence belongs to the peptidase M24A family. Methionine aminopeptidase type 1 subfamily. As to quaternary structure, monomer. Requires Co(2+) as cofactor. The cofactor is Zn(2+). Mn(2+) serves as cofactor. It depends on Fe(2+) as a cofactor.

It catalyses the reaction Release of N-terminal amino acids, preferentially methionine, from peptides and arylamides.. In terms of biological role, removes the N-terminal methionine from nascent proteins. The N-terminal methionine is often cleaved when the second residue in the primary sequence is small and uncharged (Met-Ala-, Cys, Gly, Pro, Ser, Thr, or Val). Requires deformylation of the N(alpha)-formylated initiator methionine before it can be hydrolyzed. The polypeptide is Methionine aminopeptidase (Staphylococcus epidermidis (strain ATCC 12228 / FDA PCI 1200)).